We begin with the raw amino-acid sequence, 91 residues long: Large ribosomal subunit protein bL27 (91 aa).

Positions 1–21 (MAHKKSGGSSRNGRDSAGRRL) are disordered.

Belongs to the bacterial ribosomal protein bL27 family.

This is Large ribosomal subunit protein bL27 from Phenylobacterium zucineum (strain HLK1).